Reading from the N-terminus, the 397-residue chain is MGVTKTPLYETLNESSAVALAVKLGLFPSKSTLTCQEIGDGNLNYVFHIYDQEHDRALIIKQAVPYAKVVGESWPLTIDRARIESSALIRQGEHVPHLVPRVFYSDTEMAVTVMEDLSHLKIARKGLIEGENYPHLSQHIGEFLGKTLFYSSDYALEPKVKKQLVKQFTNPELCDITERLVFTDPFFDHDTNDFEEELRPFVEKLWNNDSVKIEAAKLKKSFLTSAETLIHGDLHTGSIFASEHETKVIDPEFAFYGPIGFDVGQFIANLFLNALSRDGADREPLYEHVNQVWETFEETFSEAWQKDSLDVYANIDGYLTDTLSHIFEEAIGFAGCELIRRTIGLAHVADLDTIVPFDKRIGRKRLALETGTAFIEKRSEFKTITDVIELFKLLVKE.

ATP contacts are provided by residues N44, K61, and 115-117 (EDL). D233 contributes to the substrate binding site. Position 250 to 252 (250 to 252 (DPE)) interacts with ATP. R340 is a substrate binding site.

Belongs to the methylthioribose kinase family. Homodimer.

The enzyme catalyses 5-(methylsulfanyl)-D-ribose + ATP = 5-(methylsulfanyl)-alpha-D-ribose 1-phosphate + ADP + H(+). It functions in the pathway amino-acid biosynthesis; L-methionine biosynthesis via salvage pathway; S-methyl-5-thio-alpha-D-ribose 1-phosphate from S-methyl-5'-thioadenosine (hydrolase route): step 2/2. Its function is as follows. Catalyzes the phosphorylation of methylthioribose into methylthioribose-1-phosphate. The sequence is that of Methylthioribose kinase (mtnK) from Bacillus subtilis (strain 168).